Here is a 238-residue protein sequence, read N- to C-terminus: MSDVTTAEFNEEGKYLRKVRSFVLREGRLTKGQATAMEEQWPLMGLDYSPEPLDLAEIFGREADTVLEIGFGMGASLVEMAKASPELNFIGIEVHKPGVGACLSVAAEAGVTNLRVFHHDAIEVLENSIVPSSLARVQLFFPDPWHKKRHHKRRIVQPEFAQTIRNSLKLGGVFHLATDWENYSEHMLEVMNAAPGYKNQSTTGDVVERPDHRPLTKFEARGHRLGHGVWDIMFERID.

Glu68, Glu93, Asp120, and Asp143 together coordinate S-adenosyl-L-methionine. Asp143 is an active-site residue. Residues Lys147, Asp179, and 216–219 (TKFE) contribute to the substrate site.

This sequence belongs to the class I-like SAM-binding methyltransferase superfamily. TrmB family.

It carries out the reaction guanosine(46) in tRNA + S-adenosyl-L-methionine = N(7)-methylguanosine(46) in tRNA + S-adenosyl-L-homocysteine. It functions in the pathway tRNA modification; N(7)-methylguanine-tRNA biosynthesis. Catalyzes the formation of N(7)-methylguanine at position 46 (m7G46) in tRNA. The protein is tRNA (guanine-N(7)-)-methyltransferase of Shewanella woodyi (strain ATCC 51908 / MS32).